A 482-amino-acid polypeptide reads, in one-letter code: Vanillin dehydrogenase (482 aa).

NAD(+) is bound at residue 228–233 (GSTHVG). Catalysis depends on residues E250 and C284.

The protein belongs to the aldehyde dehydrogenase family.

The catalysed reaction is vanillin + NAD(+) + H2O = vanillate + NADH + 2 H(+). Functionally, catalyzes the NAD-dependent oxidation of vanillin to vanillic acid. The chain is Vanillin dehydrogenase (vdh) from Pseudomonas fluorescens.